The chain runs to 499 residues: Potassium voltage-gated channel subfamily A member 2 (499 aa).

The segment at Met-1–Ala-27 is disordered. A tetramerization domain region spans residues Met-1–Met-125. Residues Met-1–Gly-160 are Cytoplasmic-facing. A helical transmembrane segment spans residues Pro-161–Leu-182. At Glu-183–Pro-221 the chain is on the extracellular side. A glycan (N-linked (GlcNAc...) asparagine) is linked at Asn-207. The helical transmembrane segment at Phe-222–Ala-243 threads the bilayer. Cys-244 is lipidated: S-palmitoyl cysteine. Over Cys-244–Ile-254 the chain is Cytoplasmic. A helical membrane pass occupies residues Met-255–Ala-275. At Glu-276 to Ser-289 the chain is on the extracellular side. Residues Leu-290–His-310 traverse the membrane as a helical; Voltage-sensor segment. Residues Ser-311–Met-325 are Cytoplasmic-facing. The tract at residues Lys-312–Met-325 is S4-S5 linker. The chain crosses the membrane as a helical span at residues Arg-326–Tyr-347. Residues Phe-348–Ile-361 are Extracellular-facing. Positions Pro-362–Thr-373 form an intramembrane region, helical. The short motif at Thr-374–Asp-379 is the Selectivity filter element. Residues Thr-374–Val-381 lie within the membrane without spanning it. Residues Pro-382–Lys-388 lie on the Extracellular side of the membrane. A helical transmembrane segment spans residues Ile-389–Tyr-417. Residues His-418–Val-499 are Cytoplasmic-facing. A Phosphotyrosine modification is found at Tyr-429. Residues Ser-434, Ser-440, Ser-441, and Ser-449 each carry the phosphoserine modification. Tyr-458 is subject to Phosphotyrosine. Ser-468 bears the Phosphoserine mark. The short motif at Thr-497–Val-499 is the PDZ-binding element.

This sequence belongs to the potassium channel family. A (Shaker) (TC 1.A.1.2) subfamily. Kv1.2/KCNA2 sub-subfamily. Homotetramer and heterotetramer with other channel-forming alpha subunits, such as KCNA1, KCNA4, KCNA5, KCNA6 and KCNA7. Channel activity is regulated by interaction with the beta subunits, including KCNAB1 and KCNAB2. Identified in a complex with KCNA1 and KCNAB2. Identified in a complex with KCNA5 and KCNAB1. Interacts with the beta subunit KCNAB1. Identified in a complex with KCNA4 and FYN. Interacts with PTK2B. Interacts (via C-terminus) with CTTN. Interacts (via N-terminal cytoplasmic domain) with RHOA (GTP-bound form); this regulates channel activity by reducing location at the cell surface in response to CHRM1 activation. Interacts with DRD2. Interacts with SIGMAR1; cocaine consumption leads to increased interaction. Interacts with ADAM22. Interacts with CNTNAP2. Interacts (via C-terminus) with the PDZ domains of DLG1, DLG2 and DLG4. Interacts with ADAM11. Interacts with LYNX1. Phosphorylated on tyrosine residues; phosphorylation increases in response to ischemia. Phosphorylated on tyrosine residues by activated PTK2B/PYK2. Phosphorylation on tyrosine residues suppresses ion channel activity. Phosphorylated on tyrosine residues in response to CHRM1 activation; this abolishes interaction with CTTN. This is probably due to endocytosis of the phosphorylated channel subunits. Phosphorylated on serine residues in response to increased cAMP levels; phosphorylation is apparently not catalyzed by PKA. Post-translationally, N-glycosylated, with complex, sialylated N-glycans. In terms of tissue distribution, expressed in a wide variety of gastrointestinal smooth muscles. Not expressed in portal vein, renal artery, and uterus.

It localises to the cell membrane. The protein resides in the membrane. Its subcellular location is the cell projection. It is found in the axon. The protein localises to the synapse. It localises to the presynaptic cell membrane. The protein resides in the synaptosome. Its subcellular location is the endoplasmic reticulum membrane. It is found in the dendrite. The protein localises to the lamellipodium membrane. It localises to the cell junction. The protein resides in the paranodal septate junction. It catalyses the reaction K(+)(in) = K(+)(out). Its activity is regulated as follows. Inhibited by 4-aminopyridine (4-AP). Inhibited by dendrotoxin (DTX) and charybdotoxin (CTX), but not by tetraethylammonium (TEA). Inhibited by tityustoxin-K alpha (TsTX-Kalpha), a toxin that is highly specific for KCNA2. Inhibited by maurotoxin. Inhibited by kappaM conotoxins kappaM-RIIIJ and kappaM-RIIIK. In terms of biological role, voltage-gated potassium channel that mediates transmembrane potassium transport in excitable membranes, primarily in the brain and the central nervous system, but also in the cardiovascular system. Prevents aberrant action potential firing and regulates neuronal output. Forms tetrameric potassium-selective channels through which potassium ions pass in accordance with their electrochemical gradient. The channel alternates between opened and closed conformations in response to the voltage difference across the membrane. Can form functional homotetrameric channels and heterotetrameric channels that contain variable proportions of KCNA1, KCNA2, KCNA4, KCNA5, KCNA6, KCNA7, and possibly other family members as well; channel properties depend on the type of alpha subunits that are part of the channel. Channel properties are modulated by cytoplasmic beta subunits that regulate the subcellular location of the alpha subunits and promote rapid inactivation of delayed rectifier potassium channels. In vivo, membranes probably contain a mixture of heteromeric potassium channel complexes, making it difficult to assign currents observed in intact tissues to any particular potassium channel family member. Homotetrameric KCNA2 forms a delayed-rectifier potassium channel that opens in response to membrane depolarization, followed by slow spontaneous channel closure. In contrast, a heteromultimer formed by KCNA2 and KCNA4 shows rapid inactivation. Regulates neuronal excitability and plays a role as pacemaker in the regulation of neuronal action potentials. KCNA2-containing channels play a presynaptic role and prevent hyperexcitability and aberrant action potential firing. Response to toxins that are selective for KCNA2-containing potassium channels suggests that in Purkinje cells, dendritic subthreshold KCNA2-containing potassium channels prevent random spontaneous calcium spikes, suppressing dendritic hyperexcitability without hindering the generation of somatic action potentials, and thereby play an important role in motor coordination. Plays a role in the induction of long-term potentiation of neuron excitability in the CA3 layer of the hippocampus. May function as down-stream effector for G protein-coupled receptors and inhibit GABAergic inputs to basolateral amygdala neurons. May contribute to the regulation of neurotransmitter release, such as gamma-aminobutyric acid (GABA). Contributes to the regulation of the axonal release of the neurotransmitter dopamine. Reduced KCNA2 expression plays a role in the perception of neuropathic pain after peripheral nerve injury, but not acute pain. Plays a role in the regulation of the time spent in non-rapid eye movement (NREM) sleep. In Canis lupus familiaris (Dog), this protein is Potassium voltage-gated channel subfamily A member 2 (KCNA2).